A 352-amino-acid chain; its full sequence is NAD(P)H pyrophosphatase NUDT13, mitochondrial (352 aa).

Residues 1-20 (MSLYCRTFFRRKSFGCYRLL) constitute a mitochondrion transit peptide. Residues 196–323 (PQMAPVVITL…SLALQPSEAS (128 aa)) enclose the Nudix hydrolase domain. Residues 216–240 (RQSSFPKGLYSALAGFCDIGESVEE) carry the Nudix box motif.

The protein belongs to the Nudix hydrolase family. The cofactor is Mg(2+). Requires Mn(2+) as cofactor.

The protein resides in the mitochondrion. It carries out the reaction NADH + H2O = reduced beta-nicotinamide D-ribonucleotide + AMP + 2 H(+). The catalysed reaction is NAD(+) + H2O = beta-nicotinamide D-ribonucleotide + AMP + 2 H(+). It catalyses the reaction NADPH + H2O = reduced beta-nicotinamide D-ribonucleotide + adenosine 2',5'-bisphosphate + 2 H(+). NAD(P)H pyrophosphatase that hydrolyzes NADH into NMNH and AMP, and NADPH into NMNH and 2',5'-ADP. Has a marked preference for the reduced pyridine nucleotides. Does not show activity toward NAD-capped RNAs; the NAD-cap is an atypical cap present at the 5'-end of some RNAs. This chain is NAD(P)H pyrophosphatase NUDT13, mitochondrial, found in Mus musculus (Mouse).